The sequence spans 504 residues: Maturase K (504 aa).

Belongs to the intron maturase 2 family. MatK subfamily.

It localises to the plastid. It is found in the chloroplast. Usually encoded in the trnK tRNA gene intron. Probably assists in splicing its own and other chloroplast group II introns. This Fagus hayatae (Formosan elm) protein is Maturase K.